The following is a 542-amino-acid chain: N-substituted formamide deformylase (542 aa).

Residues 1-2 (MT) constitute a propeptide that is removed on maturation.

As to quaternary structure, homodimer. The cofactor is Zn(2+).

The enzyme catalyses N-benzylformamide + H2O = benzylamine + formate. Its activity is regulated as follows. Completely inhibited by HgCl(2), CuCl, CuCl(2) and AgNO(3). Partially inhibited by ZnCl(2) and SnCl(2). Almost completely inhibited by the reducing reagent DTT. Partially inhibited by phenylhydrazine. Moderately inhibited by phenanthroline and 8-hydroxyquinoline. Completely inhibited by the thiol-specific inhibitors N-ethylmaleimide and p-chloromercuribenzoate. Not inhibited by the carbonyl-specific inhibitors aminoguanidine and semicarbazide, the chelating agents alpha,alpha'-dipyridyl, KCN, diethyldithiocarbamate and EDTA, or the oxidizing reagents and serine-modifying reagents such as H(2)O(2), ammonium persulfate, phenylmethanesulfonyl fluoride and diisopropyl fluorophosphates. Its function is as follows. Hydrolyzes N-substituted formamides, but not amides. N-benzylformamide is the preferred substrate, while N-butylformamide is hydrolyzed at a much lower rate. Has very low activity towards allylformamide, N-(2-cyclohex-1-enylethyl)formamide and N-(alpha-methylbenzyl)formamide. In Arthrobacter pascens, this protein is N-substituted formamide deformylase.